The primary structure comprises 331 residues: MTTGPFVPHPTLDPKSLGKVGVILGGRSAEREISLLSGNGVLAALRSRGVDAHPFDPGTQPVAGLAAQGFHRVVISLHGRFGEDGTIQGLLEQFGIPYTGSGVLASALAMDKEATKRLWQTHSLPTPDFVMLHAGADWQAVADRLGLPLIVKPAREGSSIGLTKVTSVAELPAAYEKAARLDRDVMAEQFIDGDELTCAVIGEGEHATALPLIRIVAPQANYDYQHKYFTDDTRYECPAPIPAEAAARVQALVVQAYRSLGCRGWGRADIMLRKHDGAPFLLEMNTSPGMTGHSLVPMAARAVGISYEDFVLQLAATASLELRASHDWKPE.

The region spanning 116-316 is the ATP-grasp domain; sequence KRLWQTHSLP…YEDFVLQLAA (201 aa). 142-197 serves as a coordination point for ATP; that stretch reads ADRLGLPLIVKPAREGSSIGLTKVTSVAELPAAYEKAARLDRDVMAEQFIDGDELT. Mg(2+)-binding residues include Asp-269, Glu-283, and Asn-285.

This sequence belongs to the D-alanine--D-alanine ligase family. The cofactor is Mg(2+). It depends on Mn(2+) as a cofactor.

It is found in the cytoplasm. The enzyme catalyses 2 D-alanine + ATP = D-alanyl-D-alanine + ADP + phosphate + H(+). The protein operates within cell wall biogenesis; peptidoglycan biosynthesis. Cell wall formation. In Ralstonia nicotianae (strain ATCC BAA-1114 / GMI1000) (Ralstonia solanacearum), this protein is D-alanine--D-alanine ligase.